A 208-amino-acid chain; its full sequence is Receptor expression-enhancing protein 6 (208 aa).

The next 3 helical transmembrane spans lie at 49-69 (GAFL…GFVY), 93-113 (WVIY…LHWF), and 115-135 (FYYV…SWNG). Residues 187-208 (VGPAESEPRSLPSSAHTEPTVD) form a disordered region. A compositionally biased stretch (polar residues) spans 197–208 (LPSSAHTEPTVD).

The protein belongs to the DP1 family.

The protein resides in the endoplasmic reticulum membrane. It is found in the cytoplasmic vesicle. Its subcellular location is the clathrin-coated vesicle membrane. Functionally, required correct function and survival of retinal photoreceptors. Required for retinal development. In rod photoreceptors, facilitates stability and/or trafficking of guanylate cyclases and is required to maintain endoplasmic reticulum and mitochondrial homeostasis. May play a role in clathrin-coated intracellular vesicle trafficking of proteins from the endoplasmic reticulum to the retinal rod plasma membrane. This chain is Receptor expression-enhancing protein 6, found in Danio rerio (Zebrafish).